We begin with the raw amino-acid sequence, 337 residues long: tRNA N6-adenosine threonylcarbamoyltransferase (337 aa).

His111 and His115 together coordinate Fe cation. Substrate-binding positions include 134–138 (LVSGG), Asp167, Gly180, and Asn272. Asp300 serves as a coordination point for Fe cation.

It belongs to the KAE1 / TsaD family. Requires Fe(2+) as cofactor.

It localises to the cytoplasm. It catalyses the reaction L-threonylcarbamoyladenylate + adenosine(37) in tRNA = N(6)-L-threonylcarbamoyladenosine(37) in tRNA + AMP + H(+). Required for the formation of a threonylcarbamoyl group on adenosine at position 37 (t(6)A37) in tRNAs that read codons beginning with adenine. Is involved in the transfer of the threonylcarbamoyl moiety of threonylcarbamoyl-AMP (TC-AMP) to the N6 group of A37, together with TsaE and TsaB. TsaD likely plays a direct catalytic role in this reaction. The polypeptide is tRNA N6-adenosine threonylcarbamoyltransferase (Citrobacter koseri (strain ATCC BAA-895 / CDC 4225-83 / SGSC4696)).